Here is a 456-residue protein sequence, read N- to C-terminus: MASAVLPSGSQCAAAAAVAAAAAPPGLRLRLLLLLLSAAALIPTGDGQNLFTKDVTVIEGEVATISCQVNKSDDSVIQLLNPNRQTIYFRDFRPLKDSRFQLLNFSSSELKVSLTNVSISDEGRYFCQLYTDPPQESYTTITVLVPPRNLMIDIQKDTAVEGEEIEVNCTAMASKPATTIRWFKGNKELKGKSEVEEWSDMYTVTSQLMLKVHKEDDGVPVICQVEHPAVTGNLQTQRYLEVQYKPQVHIQMTYPLQGLTREGDAFELTCEAIGKPQPVMVTWVRVDDEMPQHAVLSGPNLFINNLNKTDNGTYRCEASNIVGKAHSDYMLYVYDPPTTIPPPTTTTTTTTTTTTTILTIITDTTATTEPAVHDSRAGEEGTIGAVDHAVIGGVVAVVVFAMLCLLIILGRYFARHKGTYFTHEAKGADDAADADTAIINAEGGQNNSEEKKEYFI.

Positions 1–47 are cleaved as a signal peptide; the sequence is MASAVLPSGSQCAAAAAVAAAAAPPGLRLRLLLLLLSAAALIPTGDG. The Ig-like V-type domain occupies 48-142; it reads QNLFTKDVTV…PPQESYTTIT (95 aa). Topologically, residues 48 to 388 are extracellular; it reads QNLFTKDVTV…EEGTIGAVDH (341 aa). Residues Cys-67 and Cys-127 are joined by a disulfide bond. Asn-70, Asn-104, Asn-116, and Asn-168 each carry an N-linked (GlcNAc...) asparagine glycan. 2 Ig-like C2-type domains span residues 147-241 and 246-332; these read PRNL…RYLE and PQVH…YMLY. 2 cysteine pairs are disulfide-bonded: Cys-169/Cys-223 and Cys-270/Cys-316. N-linked (GlcNAc...) asparagine glycosylation is found at Asn-307 and Asn-311. A helical transmembrane segment spans residues 389-409; the sequence is AVIGGVVAVVVFAMLCLLIIL. Topologically, residues 410 to 456 are cytoplasmic; that stretch reads GRYFARHKGTYFTHEAKGADDAADADTAIINAEGGQNNSEEKKEYFI. Thr-436 is subject to Phosphothreonine. The residue at position 448 (Ser-448) is a Phosphoserine.

It belongs to the nectin family. Homodimer (via Ig-like V-type domain). Interacts with FARP1. Interacts (via Ig-like V-type domain) with CRTAM (via Ig-like V-type domain); the interaction competes with CRTAM homodimerization and CADM1 homodimerization. Interacts (via C-terminus) with EPB41L3/DAL1. The interaction with EPB41L3/DAL1 may act to anchor CADM1 to the actin cytoskeleton. Interacts (via C-terminus) with MPP2 (via PDZ domain). Interacts (via C-terminus) with MPP3 (via PDZ domain); this interaction connects CADM1 with DLG1. Interacts (via C-terminus) with PALS2 (via PDZ domain). In terms of processing, N-glycosylated. Post-translationally, glycosylation at Asn-70 and Asn-104 promotes adhesive binding and synapse induction. In terms of tissue distribution, expressed dominantly in epithelial cells but not expressed in fibroblast cells (at protein level). Expressed in the T-cell area of lymph nodes, specifically in CD8+ and CD4- CD8- dendritic cells (at protein level). Expressed in CD8+ dendritic cells in the spleen (at protein level). Expressed in CD103+ dendritic cells in the small intestine lamina propria and mesenteric lymph nodes (at protein level). Expressed in brain, lung, kidney, testis, heart, spleen and liver, but not expressed in skeletal muscle.

It localises to the cell membrane. It is found in the synaptic cell membrane. In terms of biological role, mediates homophilic cell-cell adhesion in a Ca(2+)-independent manner. Also mediates heterophilic cell-cell adhesion with CADM3 and NECTIN3 in a Ca(2+)-independent manner. Interaction with CRTAM promotes natural killer (NK) cell cytotoxicity and interferon-gamma (IFN-gamma) secretion by CD8+ T-cells in vitro as well as NK cell-mediated rejection of tumors expressing CADM1 in vivo. In mast cells, may mediate attachment to and promote communication with nerves. CADM1, together with MITF, is essential for development and survival of mast cells in vivo. By interacting with CRTAM and thus promoting the adhesion between CD8+ T-cells and CD8+ dendritic cells, regulates the retention of activated CD8+ T-cell within the draining lymph node. Required for the intestinal retention of intraepithelial CD4+ CD8+ T-cells and, to a lesser extent, intraepithelial and lamina propria CD8+ T-cells and CD4+ T-cells. Interaction with CRTAM promotes the adhesion to gut-associated CD103+ dendritic cells, which may facilitate the expression of gut-homing and adhesion molecules on T-cells and the conversion of CD4+ T-cells into CD4+ CD8+ T-cells. Acts as a synaptic cell adhesion molecule and plays a role in the formation of dendritic spines and in synapse assembly. May be involved in neuronal migration, axon growth, pathfinding, and fasciculation on the axons of differentiating neurons. May play diverse roles in the spermatogenesis including in the adhesion of spermatocytes and spermatids to Sertoli cells and for their normal differentiation into mature spermatozoa. The chain is Cell adhesion molecule 1 from Mus musculus (Mouse).